The chain runs to 207 residues: LexA repressor (207 aa).

Residues 28–47 constitute a DNA-binding region (H-T-H motif); sequence VREIARRFRITPRGAQLHLV. Residues serine 119 and lysine 156 each act as for autocatalytic cleavage activity in the active site.

This sequence belongs to the peptidase S24 family. In terms of assembly, homodimer.

It carries out the reaction Hydrolysis of Ala-|-Gly bond in repressor LexA.. Functionally, represses a number of genes involved in the response to DNA damage (SOS response), including recA and lexA. In the presence of single-stranded DNA, RecA interacts with LexA causing an autocatalytic cleavage which disrupts the DNA-binding part of LexA, leading to derepression of the SOS regulon and eventually DNA repair. The polypeptide is LexA repressor (Thermotoga neapolitana (strain ATCC 49049 / DSM 4359 / NBRC 107923 / NS-E)).